Reading from the N-terminus, the 113-residue chain is Large ribosomal subunit protein bL19 (113 aa).

Belongs to the bacterial ribosomal protein bL19 family.

Functionally, this protein is located at the 30S-50S ribosomal subunit interface and may play a role in the structure and function of the aminoacyl-tRNA binding site. The chain is Large ribosomal subunit protein bL19 from Natranaerobius thermophilus (strain ATCC BAA-1301 / DSM 18059 / JW/NM-WN-LF).